The chain runs to 238 residues: ATP synthase subunit a (238 aa).

The next 5 membrane-spanning stretches (helical) occupy residues 15–35 (IFNLTMLAMTLLIVGVIFVFI), 76–96 (YSLFFLCLFLFMVIANNLGLM), 111–131 (PTANLQYDLTLSFLVILLTHI), 167–187 (LALRIFGNIFAGEVMTSLLLL), and 208–230 (AFSVFISCIQAYVFTLLTSVYLG).

The protein belongs to the ATPase A chain family. In terms of assembly, F-type ATPases have 2 components, CF(1) - the catalytic core - and CF(0) - the membrane proton channel. CF(1) has five subunits: alpha(3), beta(3), gamma(1), delta(1), epsilon(1). CF(0) has three main subunits: a(1), b(2) and c(9-12). The alpha and beta chains form an alternating ring which encloses part of the gamma chain. CF(1) is attached to CF(0) by a central stalk formed by the gamma and epsilon chains, while a peripheral stalk is formed by the delta and b chains.

It localises to the cell membrane. In terms of biological role, key component of the proton channel; it plays a direct role in the translocation of protons across the membrane. The protein is ATP synthase subunit a of Streptococcus pneumoniae (strain ATCC BAA-255 / R6).